The primary structure comprises 365 residues: Aminomethyltransferase (365 aa).

The protein belongs to the GcvT family. The glycine cleavage system is composed of four proteins: P, T, L and H.

The catalysed reaction is N(6)-[(R)-S(8)-aminomethyldihydrolipoyl]-L-lysyl-[protein] + (6S)-5,6,7,8-tetrahydrofolate = N(6)-[(R)-dihydrolipoyl]-L-lysyl-[protein] + (6R)-5,10-methylene-5,6,7,8-tetrahydrofolate + NH4(+). The glycine cleavage system catalyzes the degradation of glycine. The protein is Aminomethyltransferase of Synechococcus sp. (strain CC9902).